The chain runs to 266 residues: MDFVAKNLTKLRETNPLVQNITNYVVMNSTANSLLALGASPVMAHAMDELEEMVSIASSLVINIGTLDEYWIPPMEKAAKIASDLKKPIILDPVGAGATKLRTNTALKILDFADISVLRGNFGEIAAVLGEHGKTKGVDSAAYDSNEAIELSKNAAKEFNTVSAVTGPIDYVSNGKEIYAISNGHPMLSKVTGTGCATTSIIGAFSAVDEPIKAAVSGLTVYGISAEMAFGEAPYPGTFQAKVYDWLYRIDEELVLEKAKVNKFEI.

Met-43 serves as a coordination point for substrate. Positions 119 and 166 each coordinate ATP. Gly-193 provides a ligand contact to substrate.

It belongs to the Thz kinase family. It depends on Mg(2+) as a cofactor.

It catalyses the reaction 5-(2-hydroxyethyl)-4-methylthiazole + ATP = 4-methyl-5-(2-phosphooxyethyl)-thiazole + ADP + H(+). It participates in cofactor biosynthesis; thiamine diphosphate biosynthesis; 4-methyl-5-(2-phosphoethyl)-thiazole from 5-(2-hydroxyethyl)-4-methylthiazole: step 1/1. Its function is as follows. Catalyzes the phosphorylation of the hydroxyl group of 4-methyl-5-beta-hydroxyethylthiazole (THZ). The chain is Hydroxyethylthiazole kinase from Methanococcus maripaludis (strain C6 / ATCC BAA-1332).